Here is a 405-residue protein sequence, read N- to C-terminus: Calsequestrin-1 (405 aa).

An N-terminal signal peptide occupies residues 1 to 34; sequence MRATDRMGARAVSELRLALLFVLVLGTPRLGVQG. Phosphotyrosine is present on Y43. Phosphoserine is present on S81. T124 is subject to Phosphothreonine. S216 carries the post-translational modification Phosphoserine. N350 is a glycosylation site (N-linked (GlcNAc...) asparagine). A disordered region spans residues 382 to 405; that stretch reads EGEINTEDDDDDDDDDDDDDDDDD.

The protein belongs to the calsequestrin family. As to quaternary structure, monomer; increases in response to a depletion of intracellular calcium. Homodimer. Homotetramer and homopolymer. Can form linear homooligomers. Ca(2+) ions promote oligomerization. Interacts (via C-terminal end and preferentially with the monomeric form) with STIM1; this interaction increases in response to a depletion of intracellular calcium, decreases both STIM1 aggregation and clustering, interaction of STIM1 with ORAI1 and store-operated Ca(2+) entry (SOCE) activity. Interacts with ASPH and TRDN. Post-translationally, N-glycosylated. As to expression, detected in skeletal muscle (at protein level). Detected in skeletal muscle.

Its subcellular location is the endoplasmic reticulum. The protein resides in the sarcoplasmic reticulum. The protein localises to the sarcoplasmic reticulum lumen. It localises to the sarcoplasmic reticulum membrane. It is found in the mitochondrion matrix. Functionally, calsequestrin is a high-capacity, moderate affinity, calcium-binding protein and thus acts as an internal calcium store in muscle. Calcium ions are bound by clusters of acidic residues at the protein surface, often at the interface between subunits. Can bind around 80 Ca(2+) ions. Regulates the release of lumenal Ca(2+) via the calcium release channel RYR1; this plays an important role in triggering muscle contraction. Negatively regulates store-operated Ca(2+) entry (SOCE) activity. This chain is Calsequestrin-1 (Casq1), found in Mus musculus (Mouse).